A 601-amino-acid polypeptide reads, in one-letter code: NADH-quinone oxidoreductase subunit C/D (601 aa).

The interval 1–192 (MIVPDLVADA…PPYSLTEDQE (192 aa)) is NADH dehydrogenase I subunit C. Positions 216–601 (DFMFLNLGPN…IDFVMADVDR (386 aa)) are NADH dehydrogenase I subunit D.

This sequence in the N-terminal section; belongs to the complex I 30 kDa subunit family. It in the C-terminal section; belongs to the complex I 49 kDa subunit family. NDH-1 is composed of 13 different subunits. Subunits NuoB, CD, E, F, and G constitute the peripheral sector of the complex.

It localises to the cell inner membrane. The enzyme catalyses a quinone + NADH + 5 H(+)(in) = a quinol + NAD(+) + 4 H(+)(out). NDH-1 shuttles electrons from NADH, via FMN and iron-sulfur (Fe-S) centers, to quinones in the respiratory chain. The immediate electron acceptor for the enzyme in this species is believed to be ubiquinone. Couples the redox reaction to proton translocation (for every two electrons transferred, four hydrogen ions are translocated across the cytoplasmic membrane), and thus conserves the redox energy in a proton gradient. The polypeptide is NADH-quinone oxidoreductase subunit C/D (Gluconacetobacter diazotrophicus (strain ATCC 49037 / DSM 5601 / CCUG 37298 / CIP 103539 / LMG 7603 / PAl5)).